The primary structure comprises 195 residues: Interferon tau-6 (195 aa).

Residues 1–23 form the signal peptide; that stretch reads MAFVLSLLMALVLVSYGPGGSLG. 2 disulfide bridges follow: Cys-24/Cys-122 and Cys-52/Cys-162. N-linked (GlcNAc...) asparagine glycosylation occurs at Asn-101.

Belongs to the alpha/beta interferon family. IFN-alphaII subfamily. Constitutively and exclusively expressed in the mononuclear cells of the extraembryonic trophectoderm.

Its subcellular location is the secreted. Functionally, paracrine hormone primarily responsible for maternal recognition of pregnancy. Interacts with endometrial receptors, probably type I interferon receptors, and blocks estrogen receptor expression, preventing the estrogen-induced increase in oxytocin receptor expression in the endometrium. This results in the suppression of the pulsatile endometrial release of the luteolytic hormone prostaglandin F2-alpha, hindering the regression of the corpus luteum (luteolysis) and therefore a return to ovarian cyclicity. This, and a possible direct effect of IFN-tau on prostaglandin synthesis, leads in turn to continued ovarian progesterone secretion, which stimulates the secretion by the endometrium of the nutrients required for the growth of the conceptus. In summary, displays particularly high antiviral and antiproliferative potency concurrently with particular weak cytotoxicity, high antiluteolytic activity and immunomodulatory properties. In contrast with other IFNs, IFN-tau is not virally inducible. The chain is Interferon tau-6 (IFNT6) from Ovis aries (Sheep).